Consider the following 142-residue polypeptide: Transcriptional regulator MraZ (142 aa).

SpoVT-AbrB domains lie at 5–48 and 77–120; these read EFEY…PLCE and AFDV…DKET.

The protein belongs to the MraZ family. In terms of assembly, forms oligomers.

Its subcellular location is the cytoplasm. It localises to the nucleoid. The chain is Transcriptional regulator MraZ from Dehalococcoides mccartyi (strain ATCC BAA-2266 / KCTC 15142 / 195) (Dehalococcoides ethenogenes (strain 195)).